Consider the following 516-residue polypeptide: Gastrula zinc finger protein XlCGF53.1 (516 aa).

Disordered regions lie at residues 1–33 and 200–220; these read MGMWEEASDTGMKGKKKKKDKNEEEEEERGKKE and GNQSDCSINPLTEQIQGTDKP. Polar residues predominate over residues 200-218; sequence GNQSDCSINPLTEQIQGTD. 7 consecutive C2H2-type zinc fingers follow at residues 312–334, 354–376, 382–404, 410–432, 438–460, 466–488, and 494–516; these read YICSECQKHFSTKAGLARHQKTH, FPCSECGKRFARRQHLTDHQSSH, YACSQCEKYFPHRSNLNRHLKLH, FPCSQCGKRFPCVSDLNIHRRVH, YSCSECGKCFKHHSNLTNHQRTH, and FSCTECGKGFKDRSSLTVHHRTH.

The protein belongs to the krueppel C2H2-type zinc-finger protein family.

It localises to the nucleus. Its function is as follows. May be involved in transcriptional regulation. This Xenopus laevis (African clawed frog) protein is Gastrula zinc finger protein XlCGF53.1.